Here is a 92-residue protein sequence, read N- to C-terminus: Regakine-1 (92 aa).

The N-terminal stretch at 1 to 21 (MRVSLAALAFLLTLAVLHSEA) is a signal peptide. Disulfide bonds link Cys32–Cys56 and Cys33–Cys72.

It belongs to the intercrine beta (chemokine CC) family. Plasma serum.

The protein localises to the secreted. Chemotactic activity for neutrophils and lymphocytes. Binds to heparin. The chain is Regakine-1 from Bos taurus (Bovine).